The sequence spans 119 residues: Membrane-anchored ubiquitin-fold protein 6 (119 aa).

Residues 8–76 enclose the Ubiquitin-like domain; it reads IELKFRLADG…NNRTLAESRL (69 aa). Residue cysteine 114 is the site of S-palmitoyl cysteine attachment. Cysteine methyl ester is present on cysteine 116. Cysteine 116 is lipidated: S-geranylgeranyl cysteine. The propeptide at 117–119 is removed in mature form; it reads TIL.

In terms of tissue distribution, ubiquitous.

The protein localises to the cell membrane. Functionally, may serve as docking site to facilitate the association of other proteins to the plasma membrane. This chain is Membrane-anchored ubiquitin-fold protein 6 (MUB6), found in Arabidopsis thaliana (Mouse-ear cress).